The following is a 195-amino-acid chain: Nascent polypeptide-associated complex subunit alpha (195 aa).

2 disordered regions span residues 1–59 (MTGS…SRSE) and 132–153 (TREA…EEDS). Basic and acidic residues predominate over residues 7-16 (TRQKEVKEPQ). Residues 19–33 (VSDDSDNEAVEQELT) are compositionally biased toward acidic residues. Positions 47-59 (DHIDKQAKQSRSE) are enriched in basic and acidic residues. The NAC-A/B domain occupies 56–121 (SRSEKKARKL…AKIEDLTQHA (66 aa)). A compositionally biased stretch (acidic residues) spans 142-153 (EEDENEDVEEDS).

This sequence belongs to the NAC-alpha family. May be part of the nascent polypeptide-associated complex (NAC), which is a heterodimer of icd-2 and icd-1 (via NAC-A/B domains).

Its subcellular location is the cytoplasm. Its function is as follows. May prevent inappropriate targeting of non-secretory polypeptides to the endoplasmic reticulum (ER). Plays a role in the response to heat stress. In Caenorhabditis elegans, this protein is Nascent polypeptide-associated complex subunit alpha.